The chain runs to 125 residues: Fluoride-specific ion channel FluC (125 aa).

4 helical membrane passes run 4–24, 32–52, 68–88, and 100–120; these read VIYV…VGIV, FLPW…GLFA, LLIT…LDTV, and AFYV…GLAV. 2 residues coordinate Na(+): glycine 75 and threonine 78.

The protein belongs to the fluoride channel Fluc/FEX (TC 1.A.43) family.

It is found in the cell inner membrane. It catalyses the reaction fluoride(in) = fluoride(out). Na(+) is not transported, but it plays an essential structural role and its presence is essential for fluoride channel function. Functionally, fluoride-specific ion channel. Important for reducing fluoride concentration in the cell, thus reducing its toxicity. In Allorhizobium ampelinum (strain ATCC BAA-846 / DSM 112012 / S4) (Agrobacterium vitis (strain S4)), this protein is Fluoride-specific ion channel FluC.